Here is a 200-residue protein sequence, read N- to C-terminus: Holliday junction branch migration complex subunit RuvA (200 aa).

The domain I stretch occupies residues 1-63; it reads MFEYLTGLIT…EDAITLFGFA (63 aa). Residues 64–142 are domain II; sequence TQAEKRLFTQ…AVQDEVQLDF (79 aa). The flexible linker stretch occupies residues 143–151; that stretch reads TAPGPLGPS. The tract at residues 151–200 is domain III; the sequence is SAALQDALAALESLGYTTKQVERVQKQLEGLQGELSTNDYLSQGLKLLSR.

The protein belongs to the RuvA family. Homotetramer. Forms an RuvA(8)-RuvB(12)-Holliday junction (HJ) complex. HJ DNA is sandwiched between 2 RuvA tetramers; dsDNA enters through RuvA and exits via RuvB. An RuvB hexamer assembles on each DNA strand where it exits the tetramer. Each RuvB hexamer is contacted by two RuvA subunits (via domain III) on 2 adjacent RuvB subunits; this complex drives branch migration. In the full resolvosome a probable DNA-RuvA(4)-RuvB(12)-RuvC(2) complex forms which resolves the HJ.

The protein resides in the cytoplasm. The RuvA-RuvB-RuvC complex processes Holliday junction (HJ) DNA during genetic recombination and DNA repair, while the RuvA-RuvB complex plays an important role in the rescue of blocked DNA replication forks via replication fork reversal (RFR). RuvA specifically binds to HJ cruciform DNA, conferring on it an open structure. The RuvB hexamer acts as an ATP-dependent pump, pulling dsDNA into and through the RuvAB complex. HJ branch migration allows RuvC to scan DNA until it finds its consensus sequence, where it cleaves and resolves the cruciform DNA. In Limosilactobacillus fermentum (strain NBRC 3956 / LMG 18251) (Lactobacillus fermentum), this protein is Holliday junction branch migration complex subunit RuvA.